The following is a 418-amino-acid chain: E3 ubiquitin-protein ligase makorin-2 (418 aa).

C3H1-type zinc fingers lie at residues Asn2 to Ala29 and Ser31 to Pro58. The segment at Glu76–Glu100 is disordered. The C3H1-type 3 zinc-finger motif lies at Asp164 to Val191. Residues Cys192–Arg221 form a makorin-type Cys-His region. The RING-type zinc-finger motif lies at Cys237–Arg291. The C3H1-type 4 zinc-finger motif lies at Gly320–Pro349.

It is found in the cytoplasm. It localises to the nucleus. The catalysed reaction is S-ubiquitinyl-[E2 ubiquitin-conjugating enzyme]-L-cysteine + [acceptor protein]-L-lysine = [E2 ubiquitin-conjugating enzyme]-L-cysteine + N(6)-ubiquitinyl-[acceptor protein]-L-lysine.. It functions in the pathway protein modification; protein ubiquitination. In terms of biological role, E3 ubiquitin ligase catalyzing the covalent attachment of ubiquitin moieties onto substrate proteins. Inhibits neurogenesis and axis formation during embryonic development by modulating the phosphatidylinositol 3-kinase (PI3K) pathway. Acts downstream of PI3K and akt1 to up-regulate gsk3b mRNA expression. The sequence is that of E3 ubiquitin-protein ligase makorin-2 (mkrn2) from Xenopus tropicalis (Western clawed frog).